Reading from the N-terminus, the 380-residue chain is MTKPLCIALVAGEASGDILGSGLMRALKVRHPDIRFIGVGGPLMEAEGMQSYFPMERLSVMGLVEVLGRLRELLARRKLLVQTLINEKPDVFIGIDAPDFTLNIELQLRRAGIKTVHYVSPSVWAWRQKRVLKIREGCDLMLTLLPFEARFYEEKGVPVRFVGHPLADTIPLESYRAAARAGLGLAQEAPVVALMPGSRGGEVGRLGGLFFDAAELLLAQRPGLRFVLPCASPQRRAQVEQLLQGRNLPVTLLDGQSHVALAACDAVLIASGTATLEALLYKRPMVVAYRLAPLTFWILKRMVKSPYVSLPNLLAQRLLVPELLQDDATPEALARTLLPLIDDGQAQTAGFDAIHRILRRDASNQAADAVLSLLGQSSSQ.

It belongs to the LpxB family.

The catalysed reaction is a lipid X + a UDP-2-N,3-O-bis[(3R)-3-hydroxyacyl]-alpha-D-glucosamine = a lipid A disaccharide + UDP + H(+). It participates in bacterial outer membrane biogenesis; LPS lipid A biosynthesis. Condensation of UDP-2,3-diacylglucosamine and 2,3-diacylglucosamine-1-phosphate to form lipid A disaccharide, a precursor of lipid A, a phosphorylated glycolipid that anchors the lipopolysaccharide to the outer membrane of the cell. In Pseudomonas savastanoi pv. phaseolicola (strain 1448A / Race 6) (Pseudomonas syringae pv. phaseolicola (strain 1448A / Race 6)), this protein is Lipid-A-disaccharide synthase.